The sequence spans 569 residues: Serine/threonine-protein kinase gad8 (569 aa).

A disordered region spans residues 19–63 (GLNSGGSSFTRGLKNSTLSSTSSRKSSDEKSRKSSEDKRSPQSTV). Over residues 31–42 (LKNSTLSSTSSR) the composition is skewed to low complexity. Positions 43-58 (KSSDEKSRKSSEDKRS) are enriched in basic and acidic residues. One can recognise a C2 domain in the interval 45–202 (SDEKSRKSSE…IVNKLTDEWV (158 aa)). Residues 230–485 (FELLKVVGKG…AQEIKNHPFF (256 aa)) enclose the Protein kinase domain. ATP contacts are provided by residues 236-244 (VGKGSFGKV) and K259. Residue D353 is the Proton acceptor of the active site. At T387 the chain carries Phosphothreonine; by ksg1. An AGC-kinase C-terminal domain is found at 486–557 (DDIDWKKLCA…QRPTTIDTSD (72 aa)). 2 positions are modified to phosphoserine; by TORC2: S527 and S546.

It belongs to the protein kinase superfamily. AGC Ser/Thr protein kinase family. In terms of processing, phosphorylated by ksg1 and target of rapamycin complex 2 (TORC2), affecting the kinase activity of gad8 in a nutrient-dependent manner.

The enzyme catalyses L-seryl-[protein] + ATP = O-phospho-L-seryl-[protein] + ADP + H(+). The catalysed reaction is L-threonyl-[protein] + ATP = O-phospho-L-threonyl-[protein] + ADP + H(+). In terms of biological role, involved in a signaling module for sexual development and cell growth under stressed conditions. Required for G1 arrest under nitrogen starvation and for growth at high temperature and osmolarity. The protein is Serine/threonine-protein kinase gad8 of Schizosaccharomyces pombe (strain 972 / ATCC 24843) (Fission yeast).